The chain runs to 269 residues: Mitochondrial S-adenosylmethionine carrier protein (269 aa).

Solcar repeat units lie at residues 4–77, 85–167, and 176–264; these read REFC…AKQL, LSPI…LKDL, and VDSW…VRTL. The next 6 membrane-spanning stretches (helical) occupy residues 5–25, 49–69, 84–104, 141–161, 181–201, and 237–257; these read EFCASLLAGGTAGMCVDLILF, IYAGVPSTAVGSFPNAAAFFV, YLSPIIHMAAASLGEVVACLI, RGYKSTVLREIPFSLVQFPLW, SAVCGAFAGGFAAALTTPLDV, and FAGVIPRMTAISLGGFIFLGA.

It belongs to the mitochondrial carrier (TC 2.A.29) family.

Its subcellular location is the mitochondrion inner membrane. The enzyme catalyses S-adenosyl-L-homocysteine(out) + S-adenosyl-L-methionine(in) = S-adenosyl-L-homocysteine(in) + S-adenosyl-L-methionine(out). Its function is as follows. Mitochondrial S-adenosyl-L-methionine/S-adenosyl-L-homocysteine antiporter. Mediates the exchange of cytosolic S-adenosyl-L-methionine, the predominant methyl-group donor for macromolecule methylation processes, for mitochondrial S-adenosylhomocysteine(SAH), a by-product of methylation reactions. The sequence is that of Mitochondrial S-adenosylmethionine carrier protein (slc25a26) from Xenopus tropicalis (Western clawed frog).